We begin with the raw amino-acid sequence, 492 residues long: Phytoene desaturase (lycopene-forming) (492 aa).

5 to 38 (VVIGAGFGGLALAIRLQAAGIPTVLLEQRDKPGG) contacts FAD.

Belongs to the carotenoid/retinoid oxidoreductase family. It depends on FAD as a cofactor.

The enzyme catalyses 15-cis-phytoene + 4 A = all-trans-lycopene + 4 AH2. It participates in carotenoid biosynthesis; lycopene biosynthesis. In terms of biological role, this enzyme converts phytoene into lycopene via the intermediaries of phytofluene, zeta-carotene and neurosporene by the introduction of four double bonds. This is Phytoene desaturase (lycopene-forming) (crtI) from Pseudescherichia vulneris (Escherichia vulneris).